A 352-amino-acid polypeptide reads, in one-letter code: uncharacterized protein (352 aa).

A coiled-coil region spans residues 285-352; that stretch reads FQHLRNARER…IKSEIRRLQR (68 aa).

This is an uncharacterized protein from Emericella nidulans (strain FGSC A4 / ATCC 38163 / CBS 112.46 / NRRL 194 / M139) (Aspergillus nidulans).